A 93-amino-acid chain; its full sequence is Islet amyloid polypeptide (93 aa).

An N-terminal signal peptide occupies residues 1–23 (MRCISRLPAVLLILSVALGHLRA). Positions 24–35 (TPVGSGTNPQVD) are excised as a propeptide. Cys-39 and Cys-44 form a disulfide bridge. A Tyrosine amide modification is found at Tyr-74. Positions 78-93 (NVAEDPNRESLDFLLL) are excised as a propeptide.

This sequence belongs to the calcitonin family. As to quaternary structure, can form homodimers. Interacts with IDE and INS. Interaction with INS inhibits homodimerization and fibril formation. Abundant in the islets of Langerhans but is not present in the brain or seven other tissues examined.

Its subcellular location is the secreted. In terms of biological role, amylin/IAPP is a glucoregulatory peptide hormone that plays an important role in the regulation of energy homeostasis. Selectively inhibits insulin-stimulated glucose utilization and glycogen deposition in muscle, while not affecting adipocyte glucose metabolism. IAPP function is mediated by the CALCR-RAMPs (AMYRs) receptor complexes. Amylin can also bind CALCR receptor in the absence of RAMPs, although it is more selective for AMYRs. This Rattus norvegicus (Rat) protein is Islet amyloid polypeptide.